The following is a 310-amino-acid chain: p-hydroxybenzoic acid efflux pump subunit AaeA (310 aa).

Residues 12–32 (AITLVLVILAFIAIFRAWVYY) traverse the membrane as a helical segment.

This sequence belongs to the membrane fusion protein (MFP) (TC 8.A.1) family.

It localises to the cell inner membrane. Forms an efflux pump with AaeB. In Escherichia fergusonii (strain ATCC 35469 / DSM 13698 / CCUG 18766 / IAM 14443 / JCM 21226 / LMG 7866 / NBRC 102419 / NCTC 12128 / CDC 0568-73), this protein is p-hydroxybenzoic acid efflux pump subunit AaeA.